The sequence spans 89 residues: uncharacterized protein (89 aa).

This is an uncharacterized protein from Klebsiella aerogenes (Enterobacter aerogenes).